Reading from the N-terminus, the 151-residue chain is Ribosome maturation factor RimP (151 aa).

It belongs to the RimP family.

Its subcellular location is the cytoplasm. Required for maturation of 30S ribosomal subunits. This chain is Ribosome maturation factor RimP, found in Shewanella woodyi (strain ATCC 51908 / MS32).